Consider the following 248-residue polypeptide: Large ribosomal subunit protein uL4 (248 aa).

Disordered stretches follow at residues 48–96 (GTHK…PVPR) and 210–248 (AFSEDRDNPGTSLPKSPTPEDSSDATKARSSRHDDRTGA). Positions 233–248 (DATKARSSRHDDRTGA) are enriched in basic and acidic residues.

The protein belongs to the universal ribosomal protein uL4 family. In terms of assembly, part of the 50S ribosomal subunit.

Functionally, one of the primary rRNA binding proteins, this protein initially binds near the 5'-end of the 23S rRNA. It is important during the early stages of 50S assembly. It makes multiple contacts with different domains of the 23S rRNA in the assembled 50S subunit and ribosome. Its function is as follows. Forms part of the polypeptide exit tunnel. The polypeptide is Large ribosomal subunit protein uL4 (Tropheryma whipplei (strain Twist) (Whipple's bacillus)).